Reading from the N-terminus, the 55-residue chain is Putative virulence-regulating protein PA2146 (55 aa).

The interval 1 to 55 is disordered; sequence MAQHQGGKGNFAEDPKRASEAGKKGGQASGGNFKNDPQRASEAGKKGGQRSHGGN. Basic and acidic residues-rich tracts occupy residues 11-23 and 36-45; these read FAEDPKRASEAGK and DPQRASEAGK.

It belongs to the con-10 family.

May be involved in the regulation of the production of pyocyanine, one of the major virulence factors secreted by P.aeruginosa, and other virulence factors. The sequence is that of Putative virulence-regulating protein PA2146 from Pseudomonas aeruginosa (strain ATCC 15692 / DSM 22644 / CIP 104116 / JCM 14847 / LMG 12228 / 1C / PRS 101 / PAO1).